Consider the following 477-residue polypeptide: Tripartite motif-containing protein 72 (477 aa).

Residues Cys14, Cys17, Cys29, His31, Cys34, Cys37, Cys53, Cys56, Cys86, His89, Cys97, Asp100, Cys105, Cys108, His114, and His117 each contribute to the Zn(2+) site. An RING-type zinc finger spans residues 14 to 57 (CPLCLQLFDAPVTAECGHSFCRACLIRVAGEPADDGTVACPCCQ). The segment at 81–122 (VPQGHCEEHLDPLSIYCEQDRTLVCGVCASLGSHRGHRLLPA) adopts a B box-type zinc-finger fold. Positions 135-232 (QQKAQLQEAC…EKVLEEVADK (98 aa)) form a coiled coil. Cys144 is modified (S-nitrosocysteine). A Phosphoserine modification is found at Ser255. One can recognise a B30.2/SPRY domain in the interval 271 to 475 (DFKFQVWKKM…PLLLVGPDSE (205 aa)).

Belongs to the TRIM/RBCC family. Homodimer. Homooligomer; disulfide-linked. Oligomerizes on the phospholipid membrane. Interacts with DYSF and CAV3. Disulfide bond formation at Cys-242 occurs in case of membrane damage that cause the entry of the oxidized milieu of the extracellular space, resulting in homooligomerization. Post-translationally, S-nitrosylation at Cys-144 stabilizes TRIM72 and protects against oxidation-induced protein degradation and cell death.

Its subcellular location is the cell membrane. It is found in the sarcolemma. It localises to the cytoplasmic vesicle membrane. It carries out the reaction S-ubiquitinyl-[E2 ubiquitin-conjugating enzyme]-L-cysteine + [acceptor protein]-L-lysine = [E2 ubiquitin-conjugating enzyme]-L-cysteine + N(6)-ubiquitinyl-[acceptor protein]-L-lysine.. Its pathway is protein modification; protein ubiquitination. Its activity is regulated as follows. Specifically binds phosphatidylserine. The binding to phospholipids enhances ubiquitination activity. Muscle-specific E3 ubiquitin-protein ligase that plays a central role in cell membrane repair by nucleating the assembly of the repair machinery at injury sites. Its ubiquitination activity is mediated by E2 ubiquitin-conjugating enzymes UBE2D1, UBE2D2 and UBE2D3. Acts as a sensor of oxidation: upon membrane damage, entry of extracellular oxidative environment results in disulfide bond formation and homooligomerization at the injury site. This oligomerization acts as a nucleation site for recruitment of TRIM72-containing vesicles to the injury site, leading to membrane patch formation. Probably acts upstream of the Ca(2+)-dependent membrane resealing process. Required for transport of DYSF to sites of cell injury during repair patch formation. Regulates membrane budding and exocytosis. May be involved in the regulation of the mobility of KCNB1-containing endocytic vesicles. The sequence is that of Tripartite motif-containing protein 72 from Rattus norvegicus (Rat).